The sequence spans 274 residues: Beta-lactamase OXA-9 (274 aa).

The N-terminal stretch at 1–24 (MKKILLLHMLVFVSATLPISSVAS) is a signal peptide. Ser58 serves as the catalytic Acyl-ester intermediate. At Lys61 the chain carries N6-carboxylysine. 206–208 (KSG) is a binding site for substrate.

It belongs to the class-D beta-lactamase family.

It catalyses the reaction a beta-lactam + H2O = a substituted beta-amino acid. Functionally, oxacillin-hydrolyzing beta-lactamase. Confers resistance to beta-lactam antibiotics but at a significantly lower level than the TEM bla gene product. The chain is Beta-lactamase OXA-9 (bla) from Klebsiella aerogenes (Enterobacter aerogenes).